The primary structure comprises 362 residues: Probable dual-specificity RNA methyltransferase RlmN (362 aa).

The active-site Proton acceptor is the Glu-105. In terms of domain architecture, Radical SAM core spans 111–344; it reads HEYGNSICVT…VTIRREQGHD (234 aa). Cys-118 and Cys-349 are disulfide-bonded. Residues Cys-125, Cys-129, and Cys-132 each coordinate [4Fe-4S] cluster. Residues 175-176, Ser-207, 230-232, and Asn-306 contribute to the S-adenosyl-L-methionine site; these read GE and SLH. The active-site S-methylcysteine intermediate is Cys-349.

Belongs to the radical SAM superfamily. RlmN family. It depends on [4Fe-4S] cluster as a cofactor.

Its subcellular location is the cytoplasm. The enzyme catalyses adenosine(2503) in 23S rRNA + 2 reduced [2Fe-2S]-[ferredoxin] + 2 S-adenosyl-L-methionine = 2-methyladenosine(2503) in 23S rRNA + 5'-deoxyadenosine + L-methionine + 2 oxidized [2Fe-2S]-[ferredoxin] + S-adenosyl-L-homocysteine. It carries out the reaction adenosine(37) in tRNA + 2 reduced [2Fe-2S]-[ferredoxin] + 2 S-adenosyl-L-methionine = 2-methyladenosine(37) in tRNA + 5'-deoxyadenosine + L-methionine + 2 oxidized [2Fe-2S]-[ferredoxin] + S-adenosyl-L-homocysteine. Its function is as follows. Specifically methylates position 2 of adenine 2503 in 23S rRNA and position 2 of adenine 37 in tRNAs. The protein is Probable dual-specificity RNA methyltransferase RlmN of Bacillus mycoides (strain KBAB4) (Bacillus weihenstephanensis).